Reading from the N-terminus, the 632-residue chain is MIRITFLAKQKVEEYSSRVTGFDILQPDISKEAIALRVNGELYDLSREIESDTEIDVIQLNDEEGLDIIRHDAAHIMAQAVKELFPNAQVTIGPTIQDGFYYDFAIDHTFTTDDLAAIEKKMKEIIKSNHRFIREVWARKQAINFFSSIGEKYKVDIISSIPESEDLTVYRQGDFVDLCRGPHSPSTSRVKAFKLMKVAGAYWRGNVKGPMLQRIYGTAWRNKDELNIYLKRLEEAKKRDHRRIAKDMDLFHIQEEAVGQVFWHEQGYTLYNVLESYIRKKLINNGYAEVKTPILVSKELWEKSGHWDKFRENMFIVDESESKKLAIKPMNCPCHVQIFNSYTRSYRNLPIRMAEFGMCHRNESSGSLHGLMRVRGFTQDDAHIFCMEEQVNSETVKFCALLKEVYSELGFNEISVKFSDRPNVRAGDNEVWDRAEKALLEAVKEAGLSYELNPGEGAFYGPKLEFILKDAIGRSWQCGTLQVDFILPERLGAFYIGADGQKYHPVMLHRAILGTFERFIGILIEHYAGKFPLWLAPTQLVILTVTNEADNYATEISNVLKEQGVRVKTDLTNEKVSYKIRLHSSNKVPILWIVGKNEVASKTVSVRNLGSEKQESSSCEKAVKLLLKKVLI.

Residues 1 to 59 (MIRITFLAKQKVEEYSSRVTGFDILQPDISKEAIALRVNGELYDLSREIESDTEIDVIQ) enclose the TGS domain. The segment at 240-532 (DHRRIAKDMD…LIEHYAGKFP (293 aa)) is catalytic. 3 residues coordinate Zn(2+): cysteine 332, histidine 383, and histidine 509.

The protein belongs to the class-II aminoacyl-tRNA synthetase family. As to quaternary structure, homodimer. It depends on Zn(2+) as a cofactor.

Its subcellular location is the cytoplasm. The enzyme catalyses tRNA(Thr) + L-threonine + ATP = L-threonyl-tRNA(Thr) + AMP + diphosphate + H(+). Functionally, catalyzes the attachment of threonine to tRNA(Thr) in a two-step reaction: L-threonine is first activated by ATP to form Thr-AMP and then transferred to the acceptor end of tRNA(Thr). Also edits incorrectly charged L-seryl-tRNA(Thr). The polypeptide is Threonine--tRNA ligase (Wolbachia sp. subsp. Brugia malayi (strain TRS)).